The sequence spans 280 residues: Chlorophyll a-b binding protein CP26, chloroplastic (280 aa).

Residues methionine 1–lysine 48 constitute a chloroplast transit peptide. Residue phenylalanine 70 coordinates chlorophyll b. Chlorophyll a is bound by residues tyrosine 95, glutamate 114, and histidine 117. 2 helical membrane passes run tyrosine 110–isoleucine 130 and isoleucine 167–tyrosine 187. Arginine 119, isoleucine 167, glutamate 186, and arginine 189 together coordinate chlorophyll b. 6 residues coordinate chlorophyll a: lysine 224, glutamate 225, asparagine 228, arginine 230, glutamine 242, and histidine 257. A helical transmembrane segment spans residues leucine 231–valine 251.

This sequence belongs to the light-harvesting chlorophyll a/b-binding (LHC) protein family. As to quaternary structure, forms heterotrimers with LHCB3. The LHC complex consists of chlorophyll a-b binding proteins. The cofactor is Binds at least 14 chlorophylls (8 Chl-a and 6 Chl-b) and carotenoids such as lutein and neoxanthin.. In terms of processing, photoregulated by reversible phosphorylation of its threonine residues.

The protein resides in the plastid. It is found in the chloroplast thylakoid membrane. In terms of biological role, the light-harvesting complex (LHC) functions as a light receptor, it captures and delivers excitation energy to photosystems with which it is closely associated. In Arabidopsis thaliana (Mouse-ear cress), this protein is Chlorophyll a-b binding protein CP26, chloroplastic (LHCB5).